The following is a 361-amino-acid chain: Queuine tRNA-ribosyltransferase (361 aa).

Catalysis depends on Asp-92, which acts as the Proton acceptor. Substrate is bound by residues 92 to 96 (DSGGF), Asp-146, Gln-189, and Gly-216. Residues 247 to 253 (GVGKPAD) form an RNA binding region. Asp-266 functions as the Nucleophile in the catalytic mechanism. Residues 271–275 (TRSGR) are RNA binding; important for wobble base 34 recognition. Residues Cys-304, Cys-306, Cys-309, and His-335 each contribute to the Zn(2+) site.

It belongs to the queuine tRNA-ribosyltransferase family. As to quaternary structure, homodimer. Within each dimer, one monomer is responsible for RNA recognition and catalysis, while the other monomer binds to the replacement base PreQ1. Zn(2+) serves as cofactor.

The catalysed reaction is 7-aminomethyl-7-carbaguanine + guanosine(34) in tRNA = 7-aminomethyl-7-carbaguanosine(34) in tRNA + guanine. It functions in the pathway tRNA modification; tRNA-queuosine biosynthesis. In terms of biological role, catalyzes the base-exchange of a guanine (G) residue with the queuine precursor 7-aminomethyl-7-deazaguanine (PreQ1) at position 34 (anticodon wobble position) in tRNAs with GU(N) anticodons (tRNA-Asp, -Asn, -His and -Tyr). Catalysis occurs through a double-displacement mechanism. The nucleophile active site attacks the C1' of nucleotide 34 to detach the guanine base from the RNA, forming a covalent enzyme-RNA intermediate. The proton acceptor active site deprotonates the incoming PreQ1, allowing a nucleophilic attack on the C1' of the ribose to form the product. After dissociation, two additional enzymatic reactions on the tRNA convert PreQ1 to queuine (Q), resulting in the hypermodified nucleoside queuosine (7-(((4,5-cis-dihydroxy-2-cyclopenten-1-yl)amino)methyl)-7-deazaguanosine). The chain is Queuine tRNA-ribosyltransferase from Rickettsia rickettsii (strain Iowa).